The following is a 68-amino-acid chain: Gallinacin-10 (68 aa).

An N-terminal signal peptide occupies residues 1-19; that stretch reads MKILCLLFAVLLFLFQAAP. A propeptide spanning residues 20-25 is cleaved from the precursor; sequence GSADPL. 3 disulfide bridges follow: Cys32–Cys61, Cys39–Cys54, and Cys44–Cys62.

It belongs to the beta-defensin family. In terms of tissue distribution, strong expression in the testis, liver, gall bladder and kidney. Also expressed in the ovary and male and female reproductive tracts. Expressed in the ovarian stroma and the theca and granulosa layers of the ovarian follicle.

Its subcellular location is the secreted. It is found in the cytoplasmic granule. Has bactericidal activity. In Gallus gallus (Chicken), this protein is Gallinacin-10 (GAL10).